The chain runs to 559 residues: Dihydroxy-acid dehydratase 2 (559 aa).

Residue Cys-53 coordinates [2Fe-2S] cluster. Asp-85 serves as a coordination point for Mg(2+). Residue Cys-126 participates in [2Fe-2S] cluster binding. Asp-127 and Lys-128 together coordinate Mg(2+). Lys-128 bears the N6-carboxylysine mark. Cys-195 lines the [2Fe-2S] cluster pocket. A Mg(2+)-binding site is contributed by Glu-446. Ser-472 (proton acceptor) is an active-site residue.

The protein belongs to the IlvD/Edd family. As to quaternary structure, homodimer. It depends on [2Fe-2S] cluster as a cofactor. Requires Mg(2+) as cofactor.

The catalysed reaction is (2R)-2,3-dihydroxy-3-methylbutanoate = 3-methyl-2-oxobutanoate + H2O. The enzyme catalyses (2R,3R)-2,3-dihydroxy-3-methylpentanoate = (S)-3-methyl-2-oxopentanoate + H2O. Its pathway is amino-acid biosynthesis; L-isoleucine biosynthesis; L-isoleucine from 2-oxobutanoate: step 3/4. It functions in the pathway amino-acid biosynthesis; L-valine biosynthesis; L-valine from pyruvate: step 3/4. Functions in the biosynthesis of branched-chain amino acids. Catalyzes the dehydration of (2R,3R)-2,3-dihydroxy-3-methylpentanoate (2,3-dihydroxy-3-methylvalerate) into 2-oxo-3-methylpentanoate (2-oxo-3-methylvalerate) and of (2R)-2,3-dihydroxy-3-methylbutanoate (2,3-dihydroxyisovalerate) into 2-oxo-3-methylbutanoate (2-oxoisovalerate), the penultimate precursor to L-isoleucine and L-valine, respectively. This chain is Dihydroxy-acid dehydratase 2, found in Pseudoalteromonas translucida (strain TAC 125).